The following is a 403-amino-acid chain: UPF0229 protein CKR_0568 (403 aa).

Residues Ser71 to Asp109 form a disordered region. Basic and acidic residues predominate over residues Ser80–Lys97.

This sequence belongs to the UPF0229 family.

This Clostridium kluyveri (strain NBRC 12016) protein is UPF0229 protein CKR_0568.